The sequence spans 169 residues: Cell division inhibitor SulA (169 aa).

The segment at 106–112 (ALRTGNY) is ftsZ binding. Residues 162–169 (KIHSNLYH) are lon protease binding.

Belongs to the SulA family. As to quaternary structure, interacts with FtsZ. Post-translationally, is rapidly cleaved and degraded by the Lon protease once DNA damage is repaired.

Functionally, component of the SOS system and an inhibitor of cell division. Accumulation of SulA causes rapid cessation of cell division and the appearance of long, non-septate filaments. In the presence of GTP, binds a polymerization-competent form of FtsZ in a 1:1 ratio, thus inhibiting FtsZ polymerization and therefore preventing it from participating in the assembly of the Z ring. This mechanism prevents the premature segregation of damaged DNA to daughter cells during cell division. This Salmonella dublin (strain CT_02021853) protein is Cell division inhibitor SulA.